Consider the following 94-residue polypeptide: Co-chaperonin GroES (94 aa).

Residues 17–53 (DSNPNSPIQLPDSAKKKPTKGKVVSVGPGASNSDGKV) form a disordered region.

Belongs to the GroES chaperonin family. Heptamer of 7 subunits arranged in a ring. Interacts with the chaperonin GroEL.

The protein localises to the cytoplasm. Together with the chaperonin GroEL, plays an essential role in assisting protein folding. The GroEL-GroES system forms a nano-cage that allows encapsulation of the non-native substrate proteins and provides a physical environment optimized to promote and accelerate protein folding. GroES binds to the apical surface of the GroEL ring, thereby capping the opening of the GroEL channel. The sequence is that of Co-chaperonin GroES from Anaplasma phagocytophilum (strain HZ).